Consider the following 121-residue polypeptide: Small ribosomal subunit protein uS13 (121 aa).

The disordered stretch occupies residues 91 to 121 (HRRGLPVRGQNTKNNARTRKGPSKTVAGKKK). The segment covering 106 to 121 (ARTRKGPSKTVAGKKK) has biased composition (basic residues).

The protein belongs to the universal ribosomal protein uS13 family. As to quaternary structure, part of the 30S ribosomal subunit. Forms a loose heterodimer with protein S19. Forms two bridges to the 50S subunit in the 70S ribosome.

Its function is as follows. Located at the top of the head of the 30S subunit, it contacts several helices of the 16S rRNA. In the 70S ribosome it contacts the 23S rRNA (bridge B1a) and protein L5 of the 50S subunit (bridge B1b), connecting the 2 subunits; these bridges are implicated in subunit movement. Contacts the tRNAs in the A and P-sites. This chain is Small ribosomal subunit protein uS13, found in Listeria welshimeri serovar 6b (strain ATCC 35897 / DSM 20650 / CCUG 15529 / CIP 8149 / NCTC 11857 / SLCC 5334 / V8).